We begin with the raw amino-acid sequence, 500 residues long: L-arabinose isomerase (500 aa).

4 residues coordinate Mn(2+): E306, E333, H350, and H450.

Belongs to the arabinose isomerase family. Homohexamer. Requires Mn(2+) as cofactor.

It carries out the reaction beta-L-arabinopyranose = L-ribulose. Its pathway is carbohydrate degradation; L-arabinose degradation via L-ribulose; D-xylulose 5-phosphate from L-arabinose (bacterial route): step 1/3. In terms of biological role, catalyzes the conversion of L-arabinose to L-ribulose. The protein is L-arabinose isomerase of Yersinia enterocolitica serotype O:8 / biotype 1B (strain NCTC 13174 / 8081).